The chain runs to 256 residues: tRNA (guanine-N(1)-)-methyltransferase (256 aa).

S-adenosyl-L-methionine is bound by residues Gly-117 and 137–142 (LGDFVL).

This sequence belongs to the RNA methyltransferase TrmD family. In terms of assembly, homodimer.

Its subcellular location is the cytoplasm. The catalysed reaction is guanosine(37) in tRNA + S-adenosyl-L-methionine = N(1)-methylguanosine(37) in tRNA + S-adenosyl-L-homocysteine + H(+). Functionally, specifically methylates guanosine-37 in various tRNAs. In Methylibium petroleiphilum (strain ATCC BAA-1232 / LMG 22953 / PM1), this protein is tRNA (guanine-N(1)-)-methyltransferase.